We begin with the raw amino-acid sequence, 502 residues long: Protein krueppel (502 aa).

Disordered regions lie at residues 115 to 164 and 178 to 202; these read PPQG…KLSV and DMYHTSGGPISPPSSGSSPNSTHDG. Composition is skewed to low complexity over residues 119-136 and 183-198; these read THLHSPPASPHSPLSTPL and SGGPISPPSSGSSPNS. C2H2-type zinc fingers lie at residues 222-244, 250-272, 278-300, 306-328, and 334-354; these read FTCKICSRSFGYKHVLQNHERTH, FECPECHKRFTRDHHLKTHMRLH, YHCSHCDRQFVQVANLRRHLRVH, YTCEICDGKFSDSNQLKSHMLVH, and FECERCHMKFRRRHHLMNHKC. 2 disordered regions span residues 399–427 and 445–502; these read NESVDMEKATPEDDGPLDLSEDGASSVDG and RLPP…HQQH. Over residues 410 to 419 the composition is skewed to acidic residues; the sequence is EDDGPLDLSE. Residues serine 468, serine 471, and serine 477 each carry the phosphoserine modification. A compositionally biased stretch (acidic residues) spans 482-491; the sequence is DDIDLYDLDD.

Belongs to the krueppel C2H2-type zinc-finger protein family.

The protein resides in the nucleus. In terms of biological role, krueppel is a gap class segmentation protein. It is involved in the segmentation of the embryo and in the differentiation of the Malpighian tubules. The polypeptide is Protein krueppel (Kr) (Drosophila melanogaster (Fruit fly)).